Consider the following 348-residue polypeptide: Phospho-2-dehydro-3-deoxyheptonate aldolase, Trp-sensitive (348 aa).

This sequence belongs to the class-I DAHP synthase family.

It carries out the reaction D-erythrose 4-phosphate + phosphoenolpyruvate + H2O = 7-phospho-2-dehydro-3-deoxy-D-arabino-heptonate + phosphate. It functions in the pathway metabolic intermediate biosynthesis; chorismate biosynthesis; chorismate from D-erythrose 4-phosphate and phosphoenolpyruvate: step 1/7. Functionally, stereospecific condensation of phosphoenolpyruvate (PEP) and D-erythrose-4-phosphate (E4P) giving rise to 3-deoxy-D-arabino-heptulosonate-7-phosphate (DAHP). This chain is Phospho-2-dehydro-3-deoxyheptonate aldolase, Trp-sensitive (aroH), found in Enterobacter agglomerans (Erwinia herbicola).